The chain runs to 212 residues: MIIAIDGPAASGKGTMAKRLAAHYGLRHLDTGVIYRAVAHALLTAGLDLKDEARAAEVAMTLDPSTFDNPAFRSHEVGSAASVVSALPKVREALLAFQRQFASQPPGAVLDGRDIGTVICPDAEVKIYVVADPKIRAHRRTLEARSRGEPADEAAILADILARDERDQNRAVAPLKQAADAYLLDNSHLDIESGVRAAIDIVEAVRAGRQRV.

7-15 (GPAASGKGT) is a binding site for ATP.

The protein belongs to the cytidylate kinase family. Type 1 subfamily.

The protein localises to the cytoplasm. It carries out the reaction CMP + ATP = CDP + ADP. It catalyses the reaction dCMP + ATP = dCDP + ADP. The sequence is that of Cytidylate kinase from Bradyrhizobium sp. (strain ORS 278).